The primary structure comprises 307 residues: Transcription factor DIVARICATA (307 aa).

Residues 21–74 (RSTTRWTAAENKAFENALAVFDENTPNRWERVAERVPGKTVGDVMRQYKELEDD) enclose the SANT domain. Positions 109–133 (QSYGTGGRKSSSGRPSEQERKKGVP) are disordered. Residues 124–133 (SEQERKKGVP) show a composition bias toward basic and acidic residues. The HTH myb-type domain occupies 126-182 (QERKKGVPWTEEEHKLFLMGLKKYGKGDWRNISRNFVITRTPTQVASHAQKYFIRQL). The segment at residues 154-178 (WRNISRNFVITRTPTQVASHAQKYF) is a DNA-binding region (H-T-H motif). Composition is skewed to polar residues over residues 196 to 206 (ITTVNLSDNQT) and 222 to 231 (MAQQQTSSTS). A disordered region spans residues 196–231 (ITTVNLSDNQTPSPDNKKPPSSPDHSMAQQQTSSTS).

The protein localises to the nucleus. Its function is as follows. Involved in the dorsovental asymmetry of flowers. Promotes ventral identity. In Antirrhinum majus (Garden snapdragon), this protein is Transcription factor DIVARICATA (DIVARICATA).